A 302-amino-acid polypeptide reads, in one-letter code: tRNA dimethylallyltransferase (302 aa).

Residue glycine 9–serine 16 coordinates ATP. Threonine 11–serine 16 provides a ligand contact to substrate. The segment at aspartate 34–glutamine 37 is interaction with substrate tRNA.

This sequence belongs to the IPP transferase family. Monomer. Mg(2+) serves as cofactor.

It carries out the reaction adenosine(37) in tRNA + dimethylallyl diphosphate = N(6)-dimethylallyladenosine(37) in tRNA + diphosphate. Its function is as follows. Catalyzes the transfer of a dimethylallyl group onto the adenine at position 37 in tRNAs that read codons beginning with uridine, leading to the formation of N6-(dimethylallyl)adenosine (i(6)A). This is tRNA dimethylallyltransferase from Gloeobacter violaceus (strain ATCC 29082 / PCC 7421).